The chain runs to 242 residues: 1-(5-phosphoribosyl)-5-[(5-phosphoribosylamino)methylideneamino] imidazole-4-carboxamide isomerase (242 aa).

The active-site Proton acceptor is the Asp8. Catalysis depends on Asp129, which acts as the Proton donor.

It belongs to the HisA/HisF family.

It is found in the cytoplasm. It catalyses the reaction 1-(5-phospho-beta-D-ribosyl)-5-[(5-phospho-beta-D-ribosylamino)methylideneamino]imidazole-4-carboxamide = 5-[(5-phospho-1-deoxy-D-ribulos-1-ylimino)methylamino]-1-(5-phospho-beta-D-ribosyl)imidazole-4-carboxamide. Its pathway is amino-acid biosynthesis; L-histidine biosynthesis; L-histidine from 5-phospho-alpha-D-ribose 1-diphosphate: step 4/9. This Syntrophus aciditrophicus (strain SB) protein is 1-(5-phosphoribosyl)-5-[(5-phosphoribosylamino)methylideneamino] imidazole-4-carboxamide isomerase.